The sequence spans 125 residues: Large ribosomal subunit protein bL17 (125 aa).

It belongs to the bacterial ribosomal protein bL17 family. In terms of assembly, part of the 50S ribosomal subunit. Contacts protein L32.

This Syntrophus aciditrophicus (strain SB) protein is Large ribosomal subunit protein bL17.